The sequence spans 352 residues: Cellular tumor antigen p53 (352 aa).

The interval 1-48 is transcription activation (acidic); that stretch reads MDPVPDLPESQGSFQELWETVSYPPLETLSLPTVNEPTGSWVATGDMF. Residues 87-273 mediate DNA binding; the sequence is DYPGSYELEL…KTEEESRQKT (187 aa). Zn(2+)-binding residues include Cys161, His164, Cys220, and Cys224. The interval 254-261 is interaction with DNA; it reads RICACPGR. Over residues 262 to 271 the composition is skewed to basic and acidic residues; it reads DRKTEEESRQ. The segment at 262–303 is disordered; sequence DRKTEEESRQKTQPKKRKVTPNTSSSKRKKSHSSGEEEDNRE. The short motif at 276–291 is the Bipartite nuclear localization signal element; that stretch reads KKRKVTPNTSSSKRKK. Positions 302–331 are oligomerization; the sequence is REVFHFEVYGRERYEFLKKINDGLELLEKE. Residues 316 to 327 carry the Nuclear export signal motif; the sequence is EFLKKINDGLEL. A disordered region spans residues 330–352; sequence KESKSKNKDSGMVPSSGKKLKSN. Residues 334-350 form a basic (repression of DNA-binding) region; it reads SKNKDSGMVPSSGKKLK. Ser351 is modified (phosphoserine).

Belongs to the p53 family. As to quaternary structure, binds DNA as a homotetramer. The cofactor is Zn(2+).

It localises to the cytoplasm. It is found in the nucleus. Its function is as follows. Multifunctional transcription factor that induces cell cycle arrest, DNA repair or apoptosis upon binding to its target DNA sequence. Acts as a tumor suppressor in many tumor types; induces growth arrest or apoptosis depending on the physiological circumstances and cell type. Negatively regulates cell division by controlling expression of a set of genes required for this process. One of the activated genes is an inhibitor of cyclin-dependent kinases. Apoptosis induction seems to be mediated either by stimulation of BAX and FAS antigen expression, or by repression of Bcl-2 expression. In Oryzias latipes (Japanese rice fish), this protein is Cellular tumor antigen p53 (tp53).